The chain runs to 354 residues: Ornithine transcarbamylase, mitochondrial (354 aa).

A mitochondrion-targeting transit peptide spans 1-32 (MLSNLRILLNNAALRKGHTSVVRHFWCGKPVQ). Lys-70 carries the post-translational modification N6-acetyllysine; alternate. At Lys-70 the chain carries N6-succinyllysine; alternate. At Lys-80 the chain carries N6-succinyllysine. Lys-88 carries the post-translational modification N6-acetyllysine; alternate. N6-succinyllysine; alternate is present on Lys-88. 90-94 (STRTR) lines the carbamoyl phosphate pocket. Ser-133 carries the phosphoserine modification. Arg-141 contacts carbamoyl phosphate. L-ornithine is bound at residue Arg-141. Lys-144 carries the N6-acetyllysine; alternate modification. Lys-144 carries the N6-succinyllysine; alternate modification. Carbamoyl phosphate is bound at residue His-168. An L-ornithine-binding site is contributed by Asn-199. N6-acetyllysine; alternate occurs at positions 221, 231, and 238. An N6-succinyllysine; alternate mark is found at Lys-221, Lys-231, and Lys-238. Lys-243 is modified (N6-acetyllysine). 263–267 (DTWIS) contacts L-ornithine. 2 positions are modified to N6-succinyllysine: Lys-274 and Lys-289. Lys-292 carries the N6-acetyllysine; alternate modification. Lys-292 is modified (N6-succinyllysine; alternate). An L-ornithine-binding site is contributed by 302 to 305 (HCLP). Cys-303 is an active-site residue. Lys-307 carries the post-translational modification N6-acetyllysine; alternate. Lys-307 carries the post-translational modification N6-succinyllysine; alternate. Arg-330 provides a ligand contact to carbamoyl phosphate. Arg-330 provides a ligand contact to L-ornithine.

This sequence belongs to the aspartate/ornithine carbamoyltransferase superfamily. OTCase family. As to quaternary structure, homotrimer. Post-translationally, acetylation at Lys-88 negatively regulates ornithine carbamoyltransferase activity in response to nutrient signals.

It localises to the mitochondrion matrix. It catalyses the reaction carbamoyl phosphate + L-ornithine = L-citrulline + phosphate + H(+). The protein operates within nitrogen metabolism; urea cycle; L-citrulline from L-ornithine and carbamoyl phosphate: step 1/1. Its activity is regulated as follows. Negatively regulated by lysine acetylation. Functionally, catalyzes the second step of the urea cycle, the condensation of carbamoyl phosphate with L-ornithine to form L-citrulline. The urea cycle ensures the detoxification of ammonia by converting it to urea for excretion. The chain is Ornithine transcarbamylase, mitochondrial from Mus musculus (Mouse).